The sequence spans 348 residues: D-alanine--D-alanine ligase (348 aa).

The region spanning 132-334 (KQVLATVGVP…YSDLIEKLVM (203 aa)) is the ATP-grasp domain. 162–217 (LETLSFPIFVKPANMGSSVGISKATDESSLRSAIDLALKYDSRILIEQGVTAREIE) contributes to the ATP binding site. Mg(2+) is bound by residues D288, E301, and N303.

Belongs to the D-alanine--D-alanine ligase family. It depends on Mg(2+) as a cofactor. The cofactor is Mn(2+).

Its subcellular location is the cytoplasm. It catalyses the reaction 2 D-alanine + ATP = D-alanyl-D-alanine + ADP + phosphate + H(+). It functions in the pathway cell wall biogenesis; peptidoglycan biosynthesis. In terms of biological role, cell wall formation. In Streptococcus agalactiae serotype Ia (strain ATCC 27591 / A909 / CDC SS700), this protein is D-alanine--D-alanine ligase.